The primary structure comprises 419 residues: Histidine--tRNA ligase (419 aa).

It belongs to the class-II aminoacyl-tRNA synthetase family. As to quaternary structure, homodimer.

Its subcellular location is the cytoplasm. It carries out the reaction tRNA(His) + L-histidine + ATP = L-histidyl-tRNA(His) + AMP + diphosphate + H(+). This Halothermothrix orenii (strain H 168 / OCM 544 / DSM 9562) protein is Histidine--tRNA ligase.